A 104-amino-acid chain; its full sequence is Protein RnfH (104 aa).

It belongs to the UPF0125 (RnfH) family.

The chain is Protein RnfH from Pseudomonas fluorescens (strain Pf0-1).